The primary structure comprises 155 residues: Deoxyuridine 5'-triphosphate nucleotidohydrolase (155 aa).

Substrate is bound by residues 75-77 (RSG), asparagine 88, and 92-94 (TVD).

Belongs to the dUTPase family. The cofactor is Mg(2+).

It catalyses the reaction dUTP + H2O = dUMP + diphosphate + H(+). It participates in pyrimidine metabolism; dUMP biosynthesis; dUMP from dCTP (dUTP route): step 2/2. This enzyme is involved in nucleotide metabolism: it produces dUMP, the immediate precursor of thymidine nucleotides and it decreases the intracellular concentration of dUTP so that uracil cannot be incorporated into DNA. This chain is Deoxyuridine 5'-triphosphate nucleotidohydrolase, found in Caulobacter vibrioides (strain ATCC 19089 / CIP 103742 / CB 15) (Caulobacter crescentus).